A 392-amino-acid chain; its full sequence is Cobalt-precorrin-5B C(1)-methyltransferase (392 aa).

The protein belongs to the CbiD family.

The enzyme catalyses Co-precorrin-5B + S-adenosyl-L-methionine = Co-precorrin-6A + S-adenosyl-L-homocysteine. Its pathway is cofactor biosynthesis; adenosylcobalamin biosynthesis; cob(II)yrinate a,c-diamide from sirohydrochlorin (anaerobic route): step 6/10. Its function is as follows. Catalyzes the methylation of C-1 in cobalt-precorrin-5B to form cobalt-precorrin-6A. The protein is Cobalt-precorrin-5B C(1)-methyltransferase of Pelobacter propionicus (strain DSM 2379 / NBRC 103807 / OttBd1).